The following is a 209-amino-acid chain: Thymidylate kinase (209 aa).

10–17 (GLDGAGKS) contacts ATP.

Belongs to the thymidylate kinase family.

It carries out the reaction dTMP + ATP = dTDP + ADP. Functionally, phosphorylation of dTMP to form dTDP in both de novo and salvage pathways of dTTP synthesis. The sequence is that of Thymidylate kinase from Francisella tularensis subsp. tularensis (strain FSC 198).